We begin with the raw amino-acid sequence, 838 residues long: Calmodulin-binding transcription activator 6 (838 aa).

Residues 25 to 134 constitute a DNA-binding region (CG-1); the sequence is VQTMLEEAKS…YRDTQEAATT (110 aa). The stretch at 525-554 is one ANK repeat; the sequence is QGWTALHWAAYYGREKMVAALLSAGARPNL. IQ domains lie at 671–700, 713–742, and 788–817; these read SIIA…IQCR, MRRQ…SVGV, and LERS…THEE. The calmodulin-binding stretch occupies residues 738–760; that stretch reads WSVGVLEKAVLRWRQKRKGFRGL. Positions 802 to 822 form a coiled coil; that stretch reads KKAQQDYRRMKLTHEEAQVNH.

It belongs to the CAMTA family. In terms of tissue distribution, expressed in roots, stems, leaves, sepals, petals, stamen filaments, top of carpels, anthers and siliques, but not in stigmas.

It localises to the nucleus. Its function is as follows. Transcription activator that binds calmodulin in a calcium-dependent manner in vitro. Binds to the DNA consensus sequence 5'-[ACG]CGCG[GTC]-3'. Regulates transcriptional activity in response to calcium signals. This Arabidopsis thaliana (Mouse-ear cress) protein is Calmodulin-binding transcription activator 6.